The primary structure comprises 67 residues: Large ribosomal subunit protein bL35 (67 aa).

It belongs to the bacterial ribosomal protein bL35 family.

The polypeptide is Large ribosomal subunit protein bL35 (Dehalococcoides mccartyi (strain ATCC BAA-2266 / KCTC 15142 / 195) (Dehalococcoides ethenogenes (strain 195))).